Consider the following 1063-residue polypeptide: Structural polyprotein (1063 aa).

A disordered region spans residues 23–131; that stretch reads LRAELAAGAS…LGPPTNPFQA (109 aa). The tract at residues 30-69 is human C1QBP/SF2P32-binding; the sequence is GASQLRRPRPPRQRDSSTSGDDSGRDSGGPRRRRGNRGRG. Position 46 is a phosphoserine; by host (S46). The span at 59-69 shows a compositional bias: basic residues; that stretch reads PRRRRGNRGRG. Residues 70–87 are compositionally biased toward basic and acidic residues; sequence QRKDWSKAPPPPEERQES. A compositionally biased stretch (pro residues) spans 93–107; the sequence is APKPPRAPPQPPQPP. A disulfide bridge connects residues C153 and C197. Positions 279–300 are functions as E2 signal peptide; that stretch reads GAPQVFLAGLLLAAVAVGTARA. The Extracellular portion of the chain corresponds to 301 to 534; the sequence is GLQPRTDIAA…LWLATANALS (234 aa). The tract at residues 305 to 327 is disordered; the sequence is RTDIAAPPAPPQAPRAHGKHYGH. N353, N371, N410, and N429 each carry an N-linked (GlcNAc...) asparagine; by host glycan. Residues 535 to 555 form a helical membrane-spanning segment; it reads LDHALAAVVLLVPWVLIFMLC. Topologically, residues 556 to 582 are cytoplasmic; sequence RRACRRRGAAAALTAVVLQGYNPPAYG. Residues 563–582 are functions as E1 signal peptide; it reads GAAAALTAVVLQGYNPPAYG. Topologically, residues 583-1028 are extracellular; that stretch reads EEAFTYLCTA…QTWAEWAAAH (446 aa). Disulfide bonds link C590–C595, C619–C824, C641–C653, C699–C712, C758–C767, C807–C817, C931–C934, and C950–C983. N658 is a glycosylation site (N-linked (GlcNAc...) asparagine; by host). Ca(2+) is bound by residues N670 and A671. Positions 718 and 719 each coordinate Ca(2+). 2 N-linked (GlcNAc...) asparagine; by host glycosylation sites follow: N759 and N791. 2 O-linked (GalNAc...) threonine; by host glycosylation sites follow: T1011 and T1012. A helical membrane pass occupies residues 1029–1049; the sequence is WWQLTLGAICALLLAGLLACC. Topologically, residues 1050–1063 are extracellular; sequence AKCLYYLRGAIAPR.

Homodimer; further assembles into homooligomer. Interacts with human C1QBP. Interacts (via N-terminus) with protease/methyltransferase p150. As to quaternary structure, heterodimer with spike glycoprotein E2. In terms of assembly, heterodimer with spike glycoprotein E1. Structural polyprotein: Specific enzymatic cleavages in vivo yield mature proteins. Two signal peptidase-mediated cleavages within the polyprotein produce the structural proteins capsid, E2, and E1. The E2 signal peptide remains attached to the C-terminus of the capsid protein after cleavage by the signal peptidase. Another signal peptide at E2 C-terminus directs E1 to the ER, with a similar mechanism. Post-translationally, contains three N-linked oligosaccharides. In terms of processing, capsid is phosphorylated on Ser-46 by host. This phosphorylation negatively regulates capsid protein RNA-binding activity. Dephosphorylated by human PP1A.

It is found in the virion. It localises to the host cytoplasm. The protein localises to the host mitochondrion. The protein resides in the virion membrane. Its subcellular location is the host Golgi apparatus membrane. Capsid protein interacts with genomic RNA and assembles into icosahedric core particles 65-70 nm in diameter. The resulting nucleocapsid eventually associates with the cytoplasmic domain of E2 at the cell membrane, leading to budding and formation of mature virions from host Golgi membranes. Phosphorylation negatively regulates RNA-binding activity, possibly delaying virion assembly during the viral replication phase. Capsid protein dimerizes and becomes disulfide-linked in the virion. Modulates genomic RNA replication. Modulates subgenomic RNA synthesis by interacting with human C1QBP/SF2P32. Induces both perinuclear clustering of mitochondria and the formation of electron-dense intermitochondrial plaques, both hallmarks of rubella virus infected cells. Induces apoptosis when expressed in transfected cells. Its function is as follows. Responsible for viral attachment to target host cell, by binding to the cell receptor. Its transport to the plasma membrane depends on interaction with E1 protein. The surface glycoproteins display an irregular helical organization and a pseudo-tetrameric inner nucleocapsid arrangement. In terms of biological role, class II viral fusion protein. Fusion activity is inactive as long as E1 is bound to E2 in mature virion. After virus attachment to target cell and clathrin-mediated endocytosis, acidification of the endosome would induce dissociation of E1/E2 heterodimer and concomitant trimerization of the E1 subunits. This E1 homotrimer is fusion active, and promotes release of viral nucleocapsid in cytoplasm after endosome and viral membrane fusion. The cytoplasmic tail of spike glycoprotein E1 modulates virus release. The surface glycoproteins display an irregular helical organization and a pseudo-tetrameric inner nucleocapsid arrangement. The polypeptide is Structural polyprotein (Rubella virus (strain BRD1) (RUBV)).